The following is a 500-amino-acid chain: Taxoid 7-beta-hydroxylase (500 aa).

Residues 24-44 form a helical membrane-spanning segment; sequence PAILSTALTAIAGIIVLLVIT. Position 446 (Cys446) interacts with heme.

Belongs to the cytochrome P450 family.

The protein localises to the microsome membrane. It carries out the reaction taxusin + reduced [NADPH--hemoprotein reductase] + O2 = 7beta-hydroxytaxusin + oxidized [NADPH--hemoprotein reductase] + H2O + H(+). The enzyme catalyses 2alpha-hydroxytaxusin + reduced [NADPH--hemoprotein reductase] + O2 = 2alpha,7beta-dihydroxytaxusin + oxidized [NADPH--hemoprotein reductase] + H2O + H(+). It catalyses the reaction 7beta-hydroxytaxusin + reduced [NADPH--hemoprotein reductase] + O2 = 2alpha,7beta-dihydroxytaxusin + oxidized [NADPH--hemoprotein reductase] + H2O + H(+). The protein operates within alkaloid biosynthesis; taxol biosynthesis. In terms of biological role, catalyzes the conversion of taxusin to 7-beta-hydroxytaxusin in taxol biosynthesis. Catalyzes the conversion of 2-alpha-hydroxytaxusin to 2-alpha-7-beta-hydroxytaxusin in taxol biosynthesis. This Taxus cuspidata (Japanese yew) protein is Taxoid 7-beta-hydroxylase.